We begin with the raw amino-acid sequence, 210 residues long: MKNNQTNQIKKRKLPYQIDKFKVQKFHHFQPNPITNSIEPLLDGSNNNKNNNYKKLKKMNYISTTTITTTNNIDLNNLLPIENIKQLFNQLNSNREIMDTLFNQFLQLYNSINFQSPLSNLSLLPITNYSNNDNDYNSNNIISTNIEGNNNNKSFILPNLNEDLFLNIPDSLKDLTNEKSIQENITLPTLENDLHSPLNLIQQFDQIINK.

This is an uncharacterized protein from Dictyostelium discoideum (Social amoeba).